The sequence spans 127 residues: Aspartate 1-decarboxylase (127 aa).

S25 functions as the Schiff-base intermediate with substrate; via pyruvic acid in the catalytic mechanism. Pyruvic acid (Ser) is present on S25. T57 is a binding site for substrate. The active-site Proton donor is the Y58. G73–A75 provides a ligand contact to substrate.

It belongs to the PanD family. In terms of assembly, heterooctamer of four alpha and four beta subunits. It depends on pyruvate as a cofactor. In terms of processing, is synthesized initially as an inactive proenzyme, which is activated by self-cleavage at a specific serine bond to produce a beta-subunit with a hydroxyl group at its C-terminus and an alpha-subunit with a pyruvoyl group at its N-terminus.

It is found in the cytoplasm. It catalyses the reaction L-aspartate + H(+) = beta-alanine + CO2. It functions in the pathway cofactor biosynthesis; (R)-pantothenate biosynthesis; beta-alanine from L-aspartate: step 1/1. Functionally, catalyzes the pyruvoyl-dependent decarboxylation of aspartate to produce beta-alanine. The chain is Aspartate 1-decarboxylase from Aliarcobacter butzleri (strain RM4018) (Arcobacter butzleri).